The chain runs to 450 residues: Phosphopentomutase (450 aa).

Catalysis depends on Ser-93, which acts as the Phosphoserine intermediate. Residues Ser-93, Asp-231, Asp-233, and Asp-235 each contribute to the Mg(2+) site. At Ser-93 the chain carries Phosphoserine; by autocatalysis.

It belongs to the phosphohexose mutase family. Homotetramer. Mg(2+) is required as a cofactor. In terms of processing, activated by phosphorylation.

It catalyses the reaction alpha-D-ribose 1-phosphate = D-ribose 5-phosphate. The catalysed reaction is 2-deoxy-alpha-D-ribose 1-phosphate = 2-deoxy-D-ribose 5-phosphate. Its function is as follows. Catalyzes the conversion of deoxyribose 1-phosphate to deoxyribose 5-phosphate. Also shows weak activity with glucose 1-phosphate and mannose 1-phosphate. Could be involved in pentose biosynthesis. This is Phosphopentomutase from Thermococcus kodakarensis (strain ATCC BAA-918 / JCM 12380 / KOD1) (Pyrococcus kodakaraensis (strain KOD1)).